The chain runs to 308 residues: Hydroxyacylglutathione hydrolase, mitochondrial (308 aa).

A mitochondrion-targeting transit peptide spans 1-13 (MVLGRGLLGRRSL). Zn(2+)-binding residues include H102, H104, D106, and H107. K116 bears the N6-acetyllysine mark. H158 and D182 together coordinate Zn(2+). Residues 191–193 (KFY) and 221–223 (HEY) each bind substrate. Zn(2+) is bound at residue H221. An N6-acetyllysine; alternate modification is found at K229. N6-succinyllysine; alternate is present on K229. Residue 297–300 (RKEK) participates in substrate binding.

This sequence belongs to the metallo-beta-lactamase superfamily. Glyoxalase II family. As to quaternary structure, monomer. The cofactor is Zn(2+). As to expression, testis.

The protein localises to the mitochondrion matrix. Its subcellular location is the cytoplasm. The catalysed reaction is an S-(2-hydroxyacyl)glutathione + H2O = a 2-hydroxy carboxylate + glutathione + H(+). It carries out the reaction (R)-S-lactoylglutathione + H2O = (R)-lactate + glutathione + H(+). It participates in secondary metabolite metabolism; methylglyoxal degradation; (R)-lactate from methylglyoxal: step 2/2. In terms of biological role, thiolesterase that catalyzes the hydrolysis of S-D-lactoyl-glutathione to form glutathione and D-lactic acid. The chain is Hydroxyacylglutathione hydrolase, mitochondrial (HAGH) from Macaca fascicularis (Crab-eating macaque).